The chain runs to 123 residues: Large ribosomal subunit protein uL29 (123 aa).

This sequence belongs to the universal ribosomal protein uL29 family.

The protein is Large ribosomal subunit protein uL29 (RPL35) of Euphorbia esula (Leafy spurge).